The sequence spans 476 residues: Surface membrane glycoprotein GP46/M-2 (476 aa).

A signal peptide spans 1-32 (MAQCVRRLVLAAPLAAVVALLLCTSSAPVARA). 4 repeat units span residues 107 to 130 (VMILALDFGAMGQGLSGTLPPSWS), 131 to 154 (SMKHLIVLDLEGTKVSGTLPPEWS), 155 to 178 (EMTSAEALQLENCGLSGSLPTSWS), and 179 to 202 (SMPKLRIVSLSGNHFCGCVPDSWR). A 4 X 24 AA tandem repeats region spans residues 107–202 (VMILALDFGA…FCGCVPDSWR (96 aa)). Disordered stretches follow at residues 231–255 (APGTTTTNPPTTTGTPAASSTPSPG) and 348–370 (ALSPPPADGETDSHTRTRTRRRA). Residue C452 is the site of GPI-anchor amidated cysteine attachment. Residues 453-476 (PALFDGARLRCCALVVCAGAAPAG) constitute a propeptide, removed in mature form.

The protein localises to the cell membrane. This is Surface membrane glycoprotein GP46/M-2 from Leishmania amazonensis.